Reading from the N-terminus, the 141-residue chain is Large ribosomal subunit protein uL11 (141 aa).

It belongs to the universal ribosomal protein uL11 family. As to quaternary structure, part of the ribosomal stalk of the 50S ribosomal subunit. Interacts with L10 and the large rRNA to form the base of the stalk. L10 forms an elongated spine to which L12 dimers bind in a sequential fashion forming a multimeric L10(L12)X complex. In terms of processing, one or more lysine residues are methylated.

In terms of biological role, forms part of the ribosomal stalk which helps the ribosome interact with GTP-bound translation factors. This is Large ribosomal subunit protein uL11 from Helicobacter pylori (strain P12).